The following is a 543-amino-acid chain: MVSSSLRLPSLTSLLFPATTRYPATLRRTVCLRNRPLSGFATAPSGTASPETKSSEVDRLRSDRAVTPRSQDFNAWYLDVIASAELADYGPVRGTMVIRPYGYAIWEAIQDYLNVKFKETGHSNMYFPQFIPYSFIEKEASHVEGFSPELALVTVGGGKELEEKLVVRPTSETIVNHMFTQWIHSYRDLPLMINQWANVTRWEMRTKPFIRTLEFLWQEGHTAHATPEEAEKEAKQMIEIYTRFAFEQTAIPVIPGRKSKLETFAGADITYTIEAMMGDRKALQAGTSHNLGQNFSRAFGTQFADENGERQHVWQTSWAVSTRFVGGIIMTHGDDTGLMLPPKIAPIQVVIVPIWKKDTEKTGVLSAASSVKEALQTAGVRVKLDDTDQRTPGWKFNFWEMKGIPLRIEIGPRDVSSNSVVVSRRDVPGKAGKVFGISMEPSTLVAYVKEKLDEIQTSLLEKALSFRDSNIVDVNSYAELKDAISSGKWARGPWSASDADEQRVKEETGATIRCFPFEQTQGTKTCLMTGNPAEEVAIFAKSY.

The segment at 41-63 (ATAPSGTASPETKSSEVDRLRSD) is disordered. Basic and acidic residues predominate over residues 53 to 63 (KSSEVDRLRSD).

This sequence belongs to the class-II aminoacyl-tRNA synthetase family.

The protein resides in the plastid. The protein localises to the chloroplast. Its subcellular location is the mitochondrion. The catalysed reaction is tRNA(Pro) + L-proline + ATP = L-prolyl-tRNA(Pro) + AMP + diphosphate. Catalyzes the attachment of proline to tRNA(Pro) in a two-step reaction: proline is first activated by ATP to form Pro-AMP and then transferred to the acceptor end of tRNA(Pro). The sequence is that of Proline--tRNA ligase, chloroplastic/mitochondrial from Arabidopsis thaliana (Mouse-ear cress).